The following is a 478-amino-acid chain: Glycogen synthase (478 aa).

Lys20 contributes to the ADP-alpha-D-glucose binding site.

It belongs to the glycosyltransferase 1 family. Bacterial/plant glycogen synthase subfamily.

It carries out the reaction [(1-&gt;4)-alpha-D-glucosyl](n) + ADP-alpha-D-glucose = [(1-&gt;4)-alpha-D-glucosyl](n+1) + ADP + H(+). Its pathway is glycan biosynthesis; glycogen biosynthesis. In terms of biological role, synthesizes alpha-1,4-glucan chains using ADP-glucose. The protein is Glycogen synthase of Cereibacter sphaeroides (strain ATCC 17025 / ATH 2.4.3) (Rhodobacter sphaeroides).